The primary structure comprises 311 residues: Protein nfe2 (311 aa).

Responsible for the nodulation efficiency and competitive ability of strain GR4 on alfalfa roots. The polypeptide is Protein nfe2 (nfe2) (Rhizobium meliloti (Ensifer meliloti)).